We begin with the raw amino-acid sequence, 256 residues long: POU domain class 2-associating factor 1 (256 aa).

The tract at residues 1–24 is disordered; the sequence is MLWQKSTAPEQAPAPPRPYQGVRV. The OCA domain occupies 16 to 38; it reads PRPYQGVRVKEPVKELLRRKRGH.

This sequence belongs to the POU2AF family. Interacts with POU2F1/OCT1 and POU2F2/OCT2; the interaction increases POU2F1 and POU2F2 transactivation activity. Post-translationally, ubiquitinated; mediated by SIAH1 or SIAH2 and leading to its subsequent proteasomal degradation. As to expression, B-cell specific.

It is found in the nucleus. Transcriptional coactivator that specifically associates with either POU2F1/OCT1 or POU2F2/OCT2. It boosts the POU2F1/OCT1 mediated promoter activity and to a lesser extent, that of POU2F2/OCT2. It recognizes the POU domains of POU2F1/OCT1 and POU2F2/OCT2. It is essential for the response of B-cells to antigens and required for the formation of germinal centers. Regulates IL6 expression in B cells as POU2F2/OCT2 coactivator. This is POU domain class 2-associating factor 1 from Mus musculus (Mouse).